The following is an 86-amino-acid chain: ADSVNGAKIFSANCASCHAGGKNLGVAQKTLKKADLEKYGAYSAMAIGAQVTNGKNAMPAFKGRLKPEEIXXVAAYVLGKAEAEWK.

Residues Cys-14, Cys-17, His-18, and Met-58 each contribute to the heme c site.

Belongs to the cytochrome c family. PetJ subfamily. In terms of assembly, monomer. Binds 1 heme c group covalently per subunit.

The protein localises to the cellular thylakoid lumen. In terms of biological role, functions as an electron carrier between membrane-bound cytochrome b6-f and photosystem I in oxygenic photosynthesis. The chain is Cytochrome c6 (petJ) from Anabaena variabilis.